The following is a 306-amino-acid chain: N-acetylmuramic acid 6-phosphate etherase (306 aa).

The 164-residue stretch at 59-222 (ISEALRQGGR…STGAMVQLGK (164 aa)) folds into the SIS domain. Residue Glu87 is the Proton donor of the active site. Glu118 is an active-site residue.

Belongs to the GCKR-like family. MurNAc-6-P etherase subfamily. In terms of assembly, homodimer.

It catalyses the reaction N-acetyl-D-muramate 6-phosphate + H2O = N-acetyl-D-glucosamine 6-phosphate + (R)-lactate. It participates in amino-sugar metabolism; N-acetylmuramate degradation. Its function is as follows. Specifically catalyzes the cleavage of the D-lactyl ether substituent of MurNAc 6-phosphate, producing GlcNAc 6-phosphate and D-lactate. The polypeptide is N-acetylmuramic acid 6-phosphate etherase (Gloeothece citriformis (strain PCC 7424) (Cyanothece sp. (strain PCC 7424))).